We begin with the raw amino-acid sequence, 348 residues long: Eukaryotic translation initiation factor 3 subunit H (348 aa).

Residues 35–169 form the MPN domain; it reads VQIDGLVVLK…LKAYRLTPKL (135 aa). The span at 267 to 285 shows a compositional bias: low complexity; the sequence is QQQKHQYQQRRQQENIQRQ. Positions 267–311 are disordered; that stretch reads QQQKHQYQQRRQQENIQRQSRGEPPLPEEDINKLFKPPQPPPRME.

Belongs to the eIF-3 subunit H family. As to quaternary structure, component of the eukaryotic translation initiation factor 3 (eIF-3) complex, which is composed of 13 subunits: EIF3A, EIF3B, EIF3C, EIF3D, EIF3E, EIF3F, EIF3G, EIF3H, EIF3I, EIF3J, EIF3K, EIF3L and EIF3M.

Its subcellular location is the cytoplasm. Functionally, component of the eukaryotic translation initiation factor 3 (eIF-3) complex, which is involved in protein synthesis of a specialized repertoire of mRNAs and, together with other initiation factors, stimulates binding of mRNA and methionyl-tRNAi to the 40S ribosome. The eIF-3 complex specifically targets and initiates translation of a subset of mRNAs involved in cell proliferation. The protein is Eukaryotic translation initiation factor 3 subunit H of Taeniopygia guttata (Zebra finch).